We begin with the raw amino-acid sequence, 511 residues long: UPF0288 protein MK0796 (511 aa).

It belongs to the UPF0288 family.

The sequence is that of UPF0288 protein MK0796 from Methanopyrus kandleri (strain AV19 / DSM 6324 / JCM 9639 / NBRC 100938).